Reading from the N-terminus, the 143-residue chain is Large ribosomal subunit protein uL11 (143 aa).

The protein belongs to the universal ribosomal protein uL11 family. In terms of assembly, part of the ribosomal stalk of the 50S ribosomal subunit. Interacts with L10 and the large rRNA to form the base of the stalk. L10 forms an elongated spine to which L12 dimers bind in a sequential fashion forming a multimeric L10(L12)X complex. In terms of processing, one or more lysine residues are methylated.

Its function is as follows. Forms part of the ribosomal stalk which helps the ribosome interact with GTP-bound translation factors. The chain is Large ribosomal subunit protein uL11 from Nitrosomonas eutropha (strain DSM 101675 / C91 / Nm57).